A 336-amino-acid polypeptide reads, in one-letter code: Potassium channel subfamily K member 1 (336 aa).

The Cytoplasmic segment spans residues 1–20; sequence MLQSLAGSSCVRLVERHRSA. A helical membrane pass occupies residues 21–41; sequence WCFGFLVLGYLLYLVFGAVVF. At 42 to 103 the chain is on the extracellular side; it reads SSVELPYEDL…SNASGNWNWD (62 aa). An N-linked (GlcNAc...) asparagine glycan is attached at asparagine 95. Positions 104 to 116 form an intramembrane region, helical; the sequence is FASALFFASTVLS. Residues 117-122 lie within the membrane without spanning it; sequence TTGYGH. Positions 117 to 122 are selectivity filter 1; the sequence is TTGYGH. The Extracellular segment spans residues 123–132; sequence TVPLSDGGKA. Residues 133–156 form a helical membrane-spanning segment; it reads FCIIYSVIGIPFTLLFLTAVVQRV. Residues 157–181 are Cytoplasmic-facing; the sequence is TVHVTRRPVLYFHVRWGFSKQVVAI. A helical membrane pass occupies residues 182–202; the sequence is VHAVLLGLITVSCFFFIPAAV. Residues 203-211 are Extracellular-facing; that stretch reads FSVLEDDWN. Residues 212 to 224 constitute an intramembrane region (helical); it reads FLESFYFCFISLS. The tract at residues 225–230 is selectivity filter 2; sequence TIGLGD. The stretch at 225 to 231 is an intramembrane region; sequence TIGLGDY. Residues 232 to 243 lie on the Extracellular side of the membrane; the sequence is VPGEGYNQKFRE. A helical transmembrane segment spans residues 244–267; the sequence is LYKIGITCYLLLGLIAMLVVLETF. The Cytoplasmic segment spans residues 268–336; that stretch reads CELHELKKFR…SACADGPANH (69 aa). Residue lysine 274 forms a Glycyl lysine isopeptide (Lys-Gly) (interchain with G-Cter in SUMO) linkage. Residues 293–299 form an important for intracellular retention in recycling endosomes region; it reads IIEHDQL. Residues 315-336 form a disordered region; it reads QKQNEPFVATPSSACADGPANH. Serine 326 is subject to Phosphoserine.

It belongs to the two pore domain potassium channel (TC 1.A.1.8) family. In terms of assembly, homodimer; disulfide-linked. Heterodimer with KCNK2; disulfide-linked. In astrocytes, forms mostly heterodimeric potassium channels with KCNK2, with only a minor proportion of functional channels containing homodimeric KCNK1. Interacts with KCNK3 and KCNK9, forming functional heterodimeric channels. Interacts with GNG4. Identified in a complex with PSD and ARF6; interacts only with PSD that is bound to ARF6. Interacts with UBE2I. In terms of processing, sumoylation is controversial. Sumoylated by UBE2I. Not sumoylated when expressed in xenopus oocytes or mammalian cells. Sumoylation inactivates the channel, but does not interfere with expression at the cell membrane. Sumoylation of a single subunit is sufficient to silence the dimeric channel. Sumoylation of KCNK1 is sufficient to silence heterodimeric channels formed by KCNK1 and KCNK3 or KCNK9. Desumoylated by SENP1; this activates the channel. Desumoylated by SENP1; this strongly increases halothane-mediated activation of heterodimeric channels formed with KCNK9. SENP1 treatment has no effect. Expressed in renal distal tubules, especially in cortical collecting duct and cortical thick ascending limb, with lower levels in the connecting tubule.

The protein localises to the cell membrane. It is found in the recycling endosome. Its subcellular location is the synaptic cell membrane. It localises to the cytoplasmic vesicle. The protein resides in the perikaryon. The protein localises to the cell projection. It is found in the dendrite. Its subcellular location is the apical cell membrane. The catalysed reaction is K(+)(in) = K(+)(out). It catalyses the reaction NH4(+)(in) = NH4(+)(out). The enzyme catalyses Na(+)(in) = Na(+)(out). It carries out the reaction Rb(+)(in) = Rb(+)(out). The catalysed reaction is Cs(+)(in) = Cs(+)(out). It catalyses the reaction Li(+)(in) = Li(+)(out). The enzyme catalyses L-glutamate(out) = L-glutamate(in). It carries out the reaction chloride(in) = chloride(out). Functionally, ion channel that contributes to passive transmembrane potassium transport and to the regulation of the resting membrane potential in brain astrocytes, but also in kidney and in other tissues. Forms dimeric channels through which potassium ions pass in accordance with their electrochemical gradient. The channel is selective for K(+) ions at physiological potassium concentrations and at neutral pH, but becomes permeable to Na(+) at subphysiological K(+) levels and upon acidification of the extracellular medium. The homodimer has very low potassium channel activity, when expressed in heterologous systems, and can function as weakly inward rectifying potassium channel. Channel activity is modulated by activation of serotonin receptors. Heterodimeric channels containing KCNK1 and KCNK2 have much higher activity, and may represent the predominant form in astrocytes. Heterodimeric channels containing KCNK1 and KCNK3 or KCNK9 have much higher activity. Heterodimeric channels formed by KCNK1 and KCNK9 may contribute to halothane-sensitive currents. Mediates outward rectifying potassium currents in dentate gyrus granule cells and contributes to the regulation of their resting membrane potential. Contributes to the regulation of action potential firing in dentate gyrus granule cells and down-regulates their intrinsic excitability. In astrocytes, the heterodimer formed by KCNK1 and KCNK2 is required for rapid glutamate release in response to activation of G-protein coupled receptors, such as F2R and CNR1. Required for normal ion and water transport in the kidney. Contributes to the regulation of the resting membrane potential of pancreatic beta cells. The low channel activity of homodimeric KCNK1 may be due to sumoylation. The low channel activity may be due to rapid internalization from the cell membrane and retention in recycling endosomes. Permeable to monovalent cations with ion selectivity for K(+) &gt; Rb(+) &gt;&gt; NH4(+) &gt;&gt; Cs(+) = Na(+) = Li(+). This Oryctolagus cuniculus (Rabbit) protein is Potassium channel subfamily K member 1.